A 1021-amino-acid chain; its full sequence is INO80 complex subunit D (1021 aa).

Residue Lys-87 forms a Glycyl lysine isopeptide (Lys-Gly) (interchain with G-Cter in SUMO2) linkage. Phosphoserine is present on Ser-132. Disordered stretches follow at residues Phe-194–Gly-239, Arg-514–Thr-570, Arg-808–Ser-844, Ser-911–Pro-940, and Gln-976–Asn-1021. Over residues Val-224–Gly-239 the composition is skewed to polar residues. The span at Lys-520–Gln-554 shows a compositional bias: basic residues. Positions Ser-911–Pro-926 are enriched in low complexity. Polar residues predominate over residues Val-931–Pro-940. A compositionally biased stretch (low complexity) spans Ala-995–Ser-1014.

Belongs to the INO80D family. Component of the chromatin remodeling INO80 complex; specifically part of a complex module associated with the N-terminus of INO80.

It localises to the nucleus. Its function is as follows. Putative regulatory component of the chromatin remodeling INO80 complex which is involved in transcriptional regulation, DNA replication and probably DNA repair. The polypeptide is INO80 complex subunit D (Mus musculus (Mouse)).